A 267-amino-acid polypeptide reads, in one-letter code: uncharacterized protein (267 aa).

2 positions are modified to phosphoserine: serine 210 and serine 224.

As to expression, testis. Down-regulated in men with spermatocyte arrest.

Essential for normal spermatogenesis and male fertility. This is an uncharacterized protein from Homo sapiens (Human).